Here is a 319-residue protein sequence, read N- to C-terminus: Olfactory receptor 51F1 (319 aa).

Topologically, residues 1 to 37 are extracellular; sequence MLQNQDTMEILSNSTSKFPTFLLTGIPGLESAHVWIS. The chain crosses the membrane as a helical span at residues 38 to 58; the sequence is IPFCCFYAIALSGNSVILFVI. Over 59 to 75 the chain is Cytoplasmic; that stretch reads ITQQSLHEPMYYFLFRL. Residues 76-96 traverse the membrane as a helical segment; that stretch reads SATDLGLTVSSLSTTLGILWF. Residues 97 to 106 lie on the Extracellular side of the membrane; it reads EAREISLYSC. Cysteines 106 and 188 form a disulfide. Residues 107–127 traverse the membrane as a helical segment; it reads IVQMFFLHGFTFMESGVLVAT. Residues 128–149 are Cytoplasmic-facing; that stretch reads AFDRYVAICDPLRYTTILTNSR. Residues 150–170 traverse the membrane as a helical segment; it reads IIQMGLLMITRAIVLILPLLL. Residues 171–211 are Extracellular-facing; sequence LLKPLYFCRMNALSHSYCYHPDVIQLACSDIRANSICGLID. The chain crosses the membrane as a helical span at residues 212-232; that stretch reads LILTTGIDTPCIVLSYILIIH. The Cytoplasmic portion of the chain corresponds to 233–249; it reads SVLRIASPEEWHKVFST. A helical transmembrane segment spans residues 250-270; that stretch reads CVSHVGAVAFFYIHMLSLSLV. Over 271–279 the chain is Extracellular; the sequence is YRYGRSAPR. A helical transmembrane segment spans residues 280-300; sequence VVHSVMANVYLLLPPVLNPII. The Cytoplasmic portion of the chain corresponds to 301–319; sequence DSVKTKQIRKAMLSLLLTK.

The protein belongs to the G-protein coupled receptor 1 family.

It localises to the cell membrane. In terms of biological role, odorant receptor. In Homo sapiens (Human), this protein is Olfactory receptor 51F1 (OR51F1).